A 383-amino-acid polypeptide reads, in one-letter code: NIPA-like protein 2 (383 aa).

N-linked (GlcNAc...) asparagine glycosylation is found at Asn-23 and Asn-33. 7 consecutive transmembrane segments (helical) span residues 46–66, 88–108, 110–130, 144–164, 177–197, 209–229, and 243–263; these read IHLF…ISLN, VLWW…FAAY, FAPI…SAII, LLGT…APNI, LVGW…CILL, VILL…VKAV, and LTYP…VFQV. Asn-274 is a glycosylation site (N-linked (GlcNAc...) asparagine). 2 helical membrane-spanning segments follow: residues 278 to 298 and 306 to 326; these read VVPV…IIFY and FLTV…VFLV. The interval 355–383 is disordered; sequence QPDSHSLSYGTLPDGSDSTKSQSGEKKEV.

The protein belongs to the NIPA family.

It localises to the membrane. This is NIPA-like protein 2 (NIPAL2) from Homo sapiens (Human).